The primary structure comprises 423 residues: UDP-N-acetylglucosamine 1-carboxyvinyltransferase 1 (423 aa).

23–24 (KN) is a phosphoenolpyruvate binding site. Arginine 96 serves as a coordination point for UDP-N-acetyl-alpha-D-glucosamine. Cysteine 120 functions as the Proton donor in the catalytic mechanism. Cysteine 120 carries the 2-(S-cysteinyl)pyruvic acid O-phosphothioketal modification. UDP-N-acetyl-alpha-D-glucosamine-binding positions include 125–129 (RPIDL), aspartate 309, and valine 331.

It belongs to the EPSP synthase family. MurA subfamily.

The protein resides in the cytoplasm. It carries out the reaction phosphoenolpyruvate + UDP-N-acetyl-alpha-D-glucosamine = UDP-N-acetyl-3-O-(1-carboxyvinyl)-alpha-D-glucosamine + phosphate. Its pathway is cell wall biogenesis; peptidoglycan biosynthesis. Cell wall formation. Adds enolpyruvyl to UDP-N-acetylglucosamine. The protein is UDP-N-acetylglucosamine 1-carboxyvinyltransferase 1 of Streptococcus thermophilus (strain ATCC BAA-250 / LMG 18311).